Consider the following 930-residue polypeptide: Endoplasmic reticulum aminopeptidase 1 (930 aa).

Topologically, residues 1-2 (MP) are cytoplasmic. The chain crosses the membrane as a helical; Signal-anchor for type II membrane protein span at residues 3 to 23 (SLLPLVLTFLSVSSPSWCQNS). Residues 24–930 (DIESLKASNG…WLQKEKPELL (907 aa)) lie on the Lumenal side of the membrane. N-linked (GlcNAc...) asparagine glycans are attached at residues Asn59 and Asn143. Substrate is bound by residues Glu172 and 306–310 (GAMEN). His342 is a binding site for Zn(2+). The active site involves Glu343. 2 residues coordinate Zn(2+): His346 and Glu365. Cys393 and Cys432 are oxidised to a cystine. N-linked (GlcNAc...) asparagine glycans are attached at residues Asn403 and Asn655. The cysteines at positions 725 and 732 are disulfide-linked. N-linked (GlcNAc...) asparagine glycans are attached at residues Asn749 and Asn890.

The protein belongs to the peptidase M1 family. As to quaternary structure, monomer. May also exist as a heterodimer; with ERAP2. Interacts with RBMX. Zn(2+) is required as a cofactor. N-glycosylated.

The protein resides in the endoplasmic reticulum membrane. Its function is as follows. Aminopeptidase that plays a central role in peptide trimming, a step required for the generation of most HLA class I-binding peptides. Peptide trimming is essential to customize longer precursor peptides to fit them to the correct length required for presentation on MHC class I molecules. Strongly prefers substrates 9-16 residues long. Rapidly degrades 13-mer to a 9-mer and then stops. Preferentially hydrolyzes the residue Leu and peptides with a hydrophobic C-terminus, while it has weak activity toward peptides with charged C-terminus. May play a role in the inactivation of peptide hormones. May be involved in the regulation of blood pressure through the inactivation of angiotensin II and/or the generation of bradykinin in the kidney. In Mus musculus (Mouse), this protein is Endoplasmic reticulum aminopeptidase 1 (Erap1).